The primary structure comprises 366 residues: tRNA/tmRNA (uracil-C(5))-methyltransferase (366 aa).

The S-adenosyl-L-methionine site is built by Gln190, Tyr218, Asn223, Glu239, and Asp299. Residue Cys324 is the Nucleophile of the active site. The active-site Proton acceptor is the Glu358.

This sequence belongs to the class I-like SAM-binding methyltransferase superfamily. RNA M5U methyltransferase family. TrmA subfamily.

The enzyme catalyses uridine(54) in tRNA + S-adenosyl-L-methionine = 5-methyluridine(54) in tRNA + S-adenosyl-L-homocysteine + H(+). It catalyses the reaction uridine(341) in tmRNA + S-adenosyl-L-methionine = 5-methyluridine(341) in tmRNA + S-adenosyl-L-homocysteine + H(+). In terms of biological role, dual-specificity methyltransferase that catalyzes the formation of 5-methyluridine at position 54 (m5U54) in all tRNAs, and that of position 341 (m5U341) in tmRNA (transfer-mRNA). The chain is tRNA/tmRNA (uracil-C(5))-methyltransferase from Escherichia coli O17:K52:H18 (strain UMN026 / ExPEC).